A 395-amino-acid chain; its full sequence is Levanbiose-producing levanase (395 aa).

Residue Asp-1 is part of the active site. Substrate contacts are provided by residues 59 to 60, 124 to 125, Glu-173, and Trp-261; these read WT and RD.

It belongs to the glycosyl hydrolase 32 family.

Its subcellular location is the membrane. It catalyses the reaction Hydrolysis of (2-&gt;6)-beta-D-fructofuranan, to remove successive disaccharide residues as levanbiose, i.e. 6-(beta-D-fructofuranosyl)-D-fructose, from the end of the chain.. Its function is as follows. Catalyzes the degradation of levan mainly into levanbiose (difructose). Can also hydrolyze inulin. In Geobacillus stearothermophilus (Bacillus stearothermophilus), this protein is Levanbiose-producing levanase (levB).